A 138-amino-acid polypeptide reads, in one-letter code: MDRQLIIVIGLPGSGKTHLCREISSLDSSRQIVDDFIGSFYNGNVMNLLTGKCKLCINDPRLCLKNVFKRFIKIFEQDIGQENIYLILFENNPEQCKFNVQNRNDNRKGILEIVDQYSQRYDIATYSKYDYEIRTVFK.

Position 35–42 (35–42) interacts with ATP; it reads DFIGSFYN.

This is an uncharacterized protein from Acanthamoeba polyphaga mimivirus (APMV).